The following is a 432-amino-acid chain: Beta-fructosidase (432 aa).

Substrate is bound by residues 14–17 (WMND), Gln-33, Trp-41, 74–75 (FS), Tyr-92, 137–138 (RD), 188–190 (EIE), Thr-208, and Trp-260. Asp-17 is a catalytic residue.

This sequence belongs to the glycosyl hydrolase 32 family.

The enzyme catalyses Hydrolysis of terminal non-reducing beta-D-fructofuranoside residues in beta-D-fructofuranosides.. In terms of biological role, hydrolysis of sucrose, raffinose, inulin and levan. Specific for the fructose moiety and the beta-anomeric configuration of the glycosidic linkages of its substrates. The enzyme released fructose from sucrose and raffinose, and the fructose polymer inulin is hydrolyzed quantitatively in an exo-type fashion. The protein is Beta-fructosidase (bfrA) of Thermotoga maritima (strain ATCC 43589 / DSM 3109 / JCM 10099 / NBRC 100826 / MSB8).